Here is a 918-residue protein sequence, read N- to C-terminus: Hexokinase-1 (918 aa).

Met-1 is modified (N-acetylmethionine). A mitochondrial-binding peptide (MBP) region spans residues 1-10 (MIAAQLLAYY). Hexokinase domains lie at 16 to 458 (DDQV…MVTA) and 464 to 906 (AEQH…LITA). ATP-binding positions include Arg-30 and 84-89 (DLGGSS). Residues 73 to 207 (DGSEKGDFIA…DYDANIVAVV (135 aa)) are hexokinase small subdomain 1. 84 to 88 (DLGGS) serves as a coordination point for D-glucose 6-phosphate. D-glucose is bound by residues Ser-155, 172-173 (TK), and 208-209 (ND). The hexokinase large subdomain 1 stretch occupies residues 208–447 (NDTVGTMMTC…SDVRFLLSES (240 aa)). D-glucose 6-phosphate is bound by residues Asp-209 and Thr-232. Residues Asn-235, Glu-260, and 291–294 (QLFE) each bind D-glucose. Ser-337 carries the phosphoserine modification. 413-415 (DGS) serves as a coordination point for D-glucose 6-phosphate. 425–426 (RR) is an ATP binding site. Residues Thr-449, 532-536 (DLGGT), and Ser-603 contribute to the D-glucose 6-phosphate site. A hexokinase small subdomain 2 region spans residues 521 to 655 (DGTEHGDFLA…EFDLDVVAVV (135 aa)). 532-537 (DLGGTN) contacts ATP. D-glucose contacts are provided by residues 620–621 (TK) and 656–657 (ND). Positions 656–895 (NDTVGTMMTC…CTVSFLLSED (240 aa)) are hexokinase large subdomain 2. D-glucose 6-phosphate-binding residues include Asp-657 and Thr-680. Thr-680 is an ATP binding site. Positions 683, 708, and 742 each coordinate D-glucose. ATP-binding positions include 747–748 (GM), 784–788 (TKFLS), and 863–867 (TLYKL). Residues 861–863 (DGT) and Ser-897 contribute to the D-glucose 6-phosphate site.

Belongs to the hexokinase family. As to quaternary structure, monomer. Interacts with RABL2/RABL2A; binds preferentially to GTP-bound RABL2. Interacts with VDAC1. The HK1-VDAC1 complex interacts with ATF2. Interacts (via N-terminal spermatogenic cell-specific region) with PFKM (via C-terminus). Interacts with SMAD5. In terms of tissue distribution, expressed in flagella of epididymal sperm.

Its subcellular location is the mitochondrion outer membrane. The protein resides in the cytoplasm. It is found in the cytosol. It catalyses the reaction a D-hexose + ATP = a D-hexose 6-phosphate + ADP + H(+). It carries out the reaction D-fructose + ATP = D-fructose 6-phosphate + ADP + H(+). The enzyme catalyses D-glucose + ATP = D-glucose 6-phosphate + ADP + H(+). The catalysed reaction is D-mannose + ATP = D-mannose 6-phosphate + ADP + H(+). It catalyses the reaction D-glucosamine + ATP = D-glucosamine 6-phosphate + ADP + H(+). Its pathway is carbohydrate metabolism; hexose metabolism. It participates in carbohydrate degradation; glycolysis; D-glyceraldehyde 3-phosphate and glycerone phosphate from D-glucose: step 1/4. Its activity is regulated as follows. Hexokinase is an allosteric enzyme inhibited by its product D-glucose 6-phosphate. Hexokinase activity is inhibited by N-acetyl-D-glucosamine. Functionally, catalyzes the phosphorylation of various hexoses, such as D-glucose, D-glucosamine, D-fructose, D-mannose and 2-deoxy-D-glucose, to hexose 6-phosphate (D-glucose 6-phosphate, D-glucosamine 6-phosphate, D-fructose 6-phosphate, D-mannose 6-phosphate and 2-deoxy-D-glucose 6-phosphate, respectively). Mediates the initial step of glycolysis by catalyzing phosphorylation of D-glucose to D-glucose 6-phosphate. Involved in innate immunity and inflammation by acting as a pattern recognition receptor for bacterial peptidoglycan. When released in the cytosol, N-acetyl-D-glucosamine component of bacterial peptidoglycan inhibits the hexokinase activity of HK1 and causes its dissociation from mitochondrial outer membrane, thereby activating the NLRP3 inflammasome. In Rattus norvegicus (Rat), this protein is Hexokinase-1.